The primary structure comprises 356 residues: Carbamoyl phosphate synthase small chain (356 aa).

A CPSase region spans residues 1 to 160 (MKGYLKLEDG…TKKPYRIAGI (160 aa)). 3 residues coordinate L-glutamine: serine 45, glycine 211, and glycine 213. The Glutamine amidotransferase type-1 domain occupies 163–350 (KLAFIDLGTK…MDIVMVYKRR (188 aa)). The active-site Nucleophile is cysteine 238. 5 residues coordinate L-glutamine: leucine 239, glutamine 242, asparagine 280, glycine 282, and tyrosine 283. Active-site residues include histidine 323 and glutamate 325.

Belongs to the CarA family. As to quaternary structure, composed of two chains; the small (or glutamine) chain promotes the hydrolysis of glutamine to ammonia, which is used by the large (or ammonia) chain to synthesize carbamoyl phosphate. Tetramer of heterodimers (alpha,beta)4.

The catalysed reaction is hydrogencarbonate + L-glutamine + 2 ATP + H2O = carbamoyl phosphate + L-glutamate + 2 ADP + phosphate + 2 H(+). The enzyme catalyses L-glutamine + H2O = L-glutamate + NH4(+). It participates in amino-acid biosynthesis; L-arginine biosynthesis; carbamoyl phosphate from bicarbonate: step 1/1. It functions in the pathway pyrimidine metabolism; UMP biosynthesis via de novo pathway; (S)-dihydroorotate from bicarbonate: step 1/3. In terms of biological role, small subunit of the glutamine-dependent carbamoyl phosphate synthetase (CPSase). CPSase catalyzes the formation of carbamoyl phosphate from the ammonia moiety of glutamine, carbonate, and phosphate donated by ATP, constituting the first step of 2 biosynthetic pathways, one leading to arginine and/or urea and the other to pyrimidine nucleotides. The small subunit (glutamine amidotransferase) binds and cleaves glutamine to supply the large subunit with the substrate ammonia. The chain is Carbamoyl phosphate synthase small chain from Caldanaerobacter subterraneus subsp. tengcongensis (strain DSM 15242 / JCM 11007 / NBRC 100824 / MB4) (Thermoanaerobacter tengcongensis).